A 159-amino-acid polypeptide reads, in one-letter code: SsrA-binding protein (159 aa).

This sequence belongs to the SmpB family.

Its subcellular location is the cytoplasm. In terms of biological role, required for rescue of stalled ribosomes mediated by trans-translation. Binds to transfer-messenger RNA (tmRNA), required for stable association of tmRNA with ribosomes. tmRNA and SmpB together mimic tRNA shape, replacing the anticodon stem-loop with SmpB. tmRNA is encoded by the ssrA gene; the 2 termini fold to resemble tRNA(Ala) and it encodes a 'tag peptide', a short internal open reading frame. During trans-translation Ala-aminoacylated tmRNA acts like a tRNA, entering the A-site of stalled ribosomes, displacing the stalled mRNA. The ribosome then switches to translate the ORF on the tmRNA; the nascent peptide is terminated with the 'tag peptide' encoded by the tmRNA and targeted for degradation. The ribosome is freed to recommence translation, which seems to be the essential function of trans-translation. The polypeptide is SsrA-binding protein (Saccharophagus degradans (strain 2-40 / ATCC 43961 / DSM 17024)).